Here is a 539-residue protein sequence, read N- to C-terminus: Envelope glycoprotein E (539 aa).

The signal sequence occupies residues 1–24 (MRPPVRASLGLLVAWAIGACVCAA). Topologically, residues 25-410 (AIETTWKHAS…RPAAPRAARL (386 aa)) are virion surface. The interval 66 to 91 (CGSLRPSWVSLRPPGQVLDTVVDAEC) is interaction with gI. The interval 168-203 (APRRPEPAGGTPPPRDDEEGGTEEPATPAPPPHPHP) is disordered. Intrachain disulfides connect Cys-262–Cys-288, Cys-271–Cys-280, and Cys-305–Cys-314. The segment at 378–404 (ERSPPRYRPPPVEPTPSAQPTGPRPAA) is disordered. Residues 411-431 (VGVLGAAVGLAVAGLSVWACV) traverse the membrane as a helical segment. At 432-539 (TCRRARAWRA…PSSPDPPHRR (108 aa)) the chain is on the intravirion side. Residues 452-455 (YIRL) carry the Internalization motif motif. Disordered stretches follow at residues 466-497 (SYGDSDDSEYDSDSDRLPGTDPAPKRGSGFQI) and 517-539 (ITFRADDTSRYRDPSSPDPPHRR). Positions 468–480 (GDSDDSEYDSDSD) are acidic. Residues 520-531 (RADDTSRYRDPS) are compositionally biased toward basic and acidic residues.

It belongs to the alphaherpesvirinae glycoprotein E family. Interacts with gI. Phosphorylated on serines within the acidic cluster. Phosphorylation determines whether endocytosed viral gE traffics to the trans-Golgi network or recycles to the cell membrane.

The protein localises to the virion membrane. The protein resides in the host cell membrane. It localises to the host cell junction. Its subcellular location is the host Golgi apparatus membrane. It is found in the host endosome membrane. In epithelial cells, the heterodimer gE/gI is required for the cell-to-cell spread of the virus, by sorting nascent virions to cell junctions. Once the virus reaches the cell junctions, virus particles can spread to adjacent cells extremely rapidly through interactions with cellular receptors that accumulate at these junctions. Implicated in basolateral spread in polarized cells. In neuronal cells, gE/gI is essential for the anterograde spread of the infection throughout the host nervous system. Together with US9, the heterodimer gE/gI is involved in the sorting and transport of viral structural components toward axon tips. This chain is Envelope glycoprotein E (gE), found in Macaca fascicularis (Crab-eating macaque).